We begin with the raw amino-acid sequence, 212 residues long: Large ribosomal subunit protein uL3 (212 aa).

Residues 140–155 (SVSHRAIGSTGQNQSP) show a composition bias toward polar residues. The disordered stretch occupies residues 140–166 (SVSHRAIGSTGQNQSPGKVFKGKKMPG). Q153 bears the N5-methylglutamine mark.

This sequence belongs to the universal ribosomal protein uL3 family. In terms of assembly, part of the 50S ribosomal subunit. Forms a cluster with proteins L14 and L19. Post-translationally, methylated by PrmB.

In terms of biological role, one of the primary rRNA binding proteins, it binds directly near the 3'-end of the 23S rRNA, where it nucleates assembly of the 50S subunit. The sequence is that of Large ribosomal subunit protein uL3 from Psychrobacter cryohalolentis (strain ATCC BAA-1226 / DSM 17306 / VKM B-2378 / K5).